We begin with the raw amino-acid sequence, 102 residues long: MSKQKIRIRLKAFDHTILDQSAEKIVETAKTSGAKVVGPVPLPTEKDVVTILRAVHKYKDSREQFEIRTHKRLIDIVNPSPKTVDALMRLNLPAGVDIEIKL.

The protein belongs to the universal ribosomal protein uS10 family. In terms of assembly, part of the 30S ribosomal subunit.

Functionally, involved in the binding of tRNA to the ribosomes. The protein is Small ribosomal subunit protein uS10 of Clostridium beijerinckii (strain ATCC 51743 / NCIMB 8052) (Clostridium acetobutylicum).